The primary structure comprises 411 residues: Floricaula/leafy-like protein (411 aa).

The disordered stretch occupies residues 220-259; that stretch reads PDTNYGSEQTKACKKQKRRRSKDSGEDGEERQREHPFIVT. The span at 231–240 shows a compositional bias: basic residues; sequence ACKKQKRRRS. Over residues 241 to 255 the composition is skewed to basic and acidic residues; sequence KDSGEDGEERQREHP. 3 consecutive DNA-binding regions follow at residues 252–256, 321–328, and 392–395; these read REHPF, NKPKMRHY, and YVPT.

This sequence belongs to the FLO/LFY family. Expressed in vegetative buds and male cones but not in female cones, vascular tissue, roots or secondary needles.

The protein localises to the nucleus. In terms of biological role, probable transcription factor. This Pinus radiata (Monterey pine) protein is Floricaula/leafy-like protein (FLL).